The primary structure comprises 140 residues: 3-hydroxyacyl-[acyl-carrier-protein] dehydratase FabZ (140 aa).

The active site involves His47.

This sequence belongs to the thioester dehydratase family. FabZ subfamily.

It is found in the cytoplasm. It catalyses the reaction a (3R)-hydroxyacyl-[ACP] = a (2E)-enoyl-[ACP] + H2O. In terms of biological role, involved in unsaturated fatty acids biosynthesis. Catalyzes the dehydration of short chain beta-hydroxyacyl-ACPs and long chain saturated and unsaturated beta-hydroxyacyl-ACPs. This chain is 3-hydroxyacyl-[acyl-carrier-protein] dehydratase FabZ, found in Streptococcus pneumoniae (strain CGSP14).